The sequence spans 148 residues: Male-specific protein scotti (148 aa).

A disordered region spans residues 56 to 78 (PQEPPLGVFPAQGGPNGPPRLRK). Asn-129 carries N-linked (GlcNAc...) asparagine glycosylation.

The protein belongs to the male-specific scotti family.

Post-meiotically transcribed gene that has a role in late spermiogenesis; required for actin cone progression during spermatid individualization. The chain is Male-specific protein scotti from Drosophila sechellia (Fruit fly).